Consider the following 68-residue polypeptide: Protein P34 (68 aa).

A run of 2 helical transmembrane segments spans residues 4–24 and 41–61; these read FVGPIVTVLTAIIGVAILAVL and GFSSMLGTALSPVTGGTGFAM.

It localises to the virion membrane. This chain is Protein P34 (XXXIV), found in Acinetobacter calcoaceticus (Arthrobacter siderocapsulatus).